The following is a 652-amino-acid chain: Complement component C1q receptor (652 aa).

A signal peptide spans 1 to 21 (MATSMGLLLLLLLLLTQPGAG). The Extracellular segment spans residues 24–580 (ADTEAVVCVG…QNNDGTDGQK (557 aa)). Positions 32–174 (VGTACYTAHS…CGSPGSPGSN (143 aa)) constitute a C-type lectin domain. 16 disulfide bridges follow: C141–C165, C264–C275, C271–C285, C287–C300, C306–C317, C311–C328, C330–C343, C349–C358, C354–C367, C369–C383, C389–C400, C396–C409, C411–C425, C431–C443, C439–C452, and C454–C467. EGF-like domains lie at 260–301 (PKYG…VTCA) and 302–344 (SRNP…LDCV). N-linked (GlcNAc...) asparagine glycosylation occurs at N325. The region spanning 345 to 384 (DVDECQDSPCAQECVNTPGGFRCECWVGYEPGGPGEGACQ) is the EGF-like 3; calcium-binding domain. The EGF-like 4; calcium-binding domain maps to 385-426 (DVDECALGRSPCAQGCTNTDGSFHCSCEEGYVLAGEDGTQCQ). The EGF-like 5; calcium-binding domain maps to 427–468 (DVDECVGPGGPLCDSLCFNTQGSFHCGCLPGWVLAPNGVSCT). 2 disordered regions span residues 472–546 (VSLG…VWRE) and 553–572 (TAAS…ATQN). Residues 512-526 (ATPTTSRPSLSSDAP) show a composition bias toward polar residues. Residues 581–601 (LLLFYILGTVVAILLLLALAL) traverse the membrane as a helical segment. Residues 602-652 (GLLVYRKRRAKREEKKEKKPQNAADSYSWVPERAESRAMENQYSPTPGTDC) lie on the Cytoplasmic side of the membrane. The segment at 611–652 (AKREEKKEKKPQNAADSYSWVPERAESRAMENQYSPTPGTDC) is disordered. Residues 612–621 (KREEKKEKKP) are compositionally biased toward basic and acidic residues. S627 carries the post-translational modification Phosphoserine. 2 positions are modified to phosphotyrosine: Y628 and Y644. The segment covering 640–652 (MENQYSPTPGTDC) has biased composition (polar residues).

Homodimer. Interacts with C1QBP; the association may represent a cell surface C1q receptor. Interacts with surfactant protein A/SFTPA1. Interacts with multimerin-2/MMRN2. Interacts with DAG1; this interaction plays an important role in endothelial cell migration. Interacts with CBL. Interacts with IGFBP7. Interacts with VEGFR2. In terms of assembly, (Microbial infection) Interacts with hepatitis virus C/HCV core protein. In terms of processing, N- and O-glycosylated. Post-translationally, phosphorylated on Tyr-628 and Tyr-644 by SRC; these phosphorylations promote endothelial cell adhesion and migration. Highly expressed in endothelial cells, platelets, cells of myeloid origin, such as monocytes and neutrophils. Not expressed in cells of lymphoid origin.

It is found in the cell membrane. Functionally, cell surface receptor that plays a role in various physiological processes including inflammation, phagocytosis, and cell adhesion. Plays a role in phagocytosis and enhances the uptake of apoptotic cells and immune complexes by acting as a receptor for defense collagens including surfactant protein A/SFTPA1, C1q, and mannose-binding lectin (MBL2). Plays a role in the regulation of endothelial cell function and adhesion by activating angiogenesis. Mechanistically, exerts its angiogenic function by associating with beta-dystroglycan, leading to SRC-dependent phosphorylation and subsequent recruitment of CBL. In turn, CBL provides a docking site for downstream signaling components, such as CRKL to enhance cell migration. Participates in angiogenesis also by acting as a receptor for the ECM pan-endothelial glycoprotein multimerin-2/MMRN2 and IGFBP7 ligands. Both ligands play a non-redundant role in CD93-mediated endothelial cell function. Acts as a key regulator of endothelial barrier function through modulating VEGFR2 function. This is Complement component C1q receptor (CD93) from Homo sapiens (Human).